Here is a 427-residue protein sequence, read N- to C-terminus: Trigger factor (427 aa).

A PPIase FKBP-type domain is found at 163-248; it reads GDTVVIDFVG…IHEVKTKEVP (86 aa).

Belongs to the FKBP-type PPIase family. Tig subfamily.

The protein resides in the cytoplasm. It carries out the reaction [protein]-peptidylproline (omega=180) = [protein]-peptidylproline (omega=0). Functionally, involved in protein export. Acts as a chaperone by maintaining the newly synthesized protein in an open conformation. Functions as a peptidyl-prolyl cis-trans isomerase. This chain is Trigger factor (tig), found in Streptococcus pyogenes serotype M1.